The following is a 206-amino-acid chain: Dual specificity phosphatase 29 (206 aa).

One can recognise a Tyrosine-protein phosphatase domain in the interval 47–194 (HVNQVWPSVY…LRALDITLQE (148 aa)). Residue 138–145 (HCVMGRSR) participates in substrate binding. The Phosphocysteine intermediate role is filled by Cys-139.

This sequence belongs to the protein-tyrosine phosphatase family. Non-receptor class dual specificity subfamily.

It localises to the cytoplasm. Its subcellular location is the nucleus. The enzyme catalyses O-phospho-L-tyrosyl-[protein] + H2O = L-tyrosyl-[protein] + phosphate. It catalyses the reaction O-phospho-L-seryl-[protein] + H2O = L-seryl-[protein] + phosphate. The catalysed reaction is O-phospho-L-threonyl-[protein] + H2O = L-threonyl-[protein] + phosphate. Dual specificity phosphatase able to dephosphorylate phosphotyrosine, phosphoserine and phosphothreonine residues within the same substrate, with a preference for phosphotyrosine as a substrate. Involved in the modulation of AMPK and MAPK1/2 signaling pathways. This chain is Dual specificity phosphatase 29 (dusp29), found in Gasterosteus aculeatus (Three-spined stickleback).